The chain runs to 435 residues: Methylenetetrahydrofolate--tRNA-(uracil-5-)-methyltransferase TrmFO (435 aa).

FAD is bound at residue 9–14; it reads GAGLAG.

It belongs to the MnmG family. TrmFO subfamily. Requires FAD as cofactor.

It localises to the cytoplasm. It catalyses the reaction uridine(54) in tRNA + (6R)-5,10-methylene-5,6,7,8-tetrahydrofolate + NADH + H(+) = 5-methyluridine(54) in tRNA + (6S)-5,6,7,8-tetrahydrofolate + NAD(+). It carries out the reaction uridine(54) in tRNA + (6R)-5,10-methylene-5,6,7,8-tetrahydrofolate + NADPH + H(+) = 5-methyluridine(54) in tRNA + (6S)-5,6,7,8-tetrahydrofolate + NADP(+). Catalyzes the folate-dependent formation of 5-methyl-uridine at position 54 (M-5-U54) in all tRNAs. This chain is Methylenetetrahydrofolate--tRNA-(uracil-5-)-methyltransferase TrmFO, found in Staphylococcus aureus (strain MRSA252).